The sequence spans 299 residues: Putative arsenical pump-driving ATPase 2 (299 aa).

8 to 15 serves as a coordination point for ATP; the sequence is GKGGVGKT.

It belongs to the arsA ATPase family.

The enzyme catalyses arsenite(in) + ATP + H2O = arsenite(out) + ADP + phosphate + H(+). Its function is as follows. Anion-transporting ATPase. Catalyzes the extrusion of arsenite. The sequence is that of Putative arsenical pump-driving ATPase 2 (arsA2) from Aquifex aeolicus (strain VF5).